The chain runs to 347 residues: Putative coenzyme F420-dependent oxidoreductase Rv3520c (347 aa).

In Mycobacterium tuberculosis (strain ATCC 25618 / H37Rv), this protein is Putative coenzyme F420-dependent oxidoreductase Rv3520c.